A 331-amino-acid polypeptide reads, in one-letter code: Ornithine carbamoyltransferase (331 aa).

Carbamoyl phosphate-binding positions include 55–58 (STRT), Gln82, Arg106, and 133–136 (HPTQ). Residues Asn166, Asp230, and 234 to 235 (SM) contribute to the L-ornithine site. Carbamoyl phosphate contacts are provided by residues 272–273 (CL) and Arg317.

This sequence belongs to the aspartate/ornithine carbamoyltransferase superfamily. OTCase family.

The protein localises to the cytoplasm. It catalyses the reaction carbamoyl phosphate + L-ornithine = L-citrulline + phosphate + H(+). It functions in the pathway amino-acid biosynthesis; L-arginine biosynthesis; L-arginine from L-ornithine and carbamoyl phosphate: step 1/3. Functionally, reversibly catalyzes the transfer of the carbamoyl group from carbamoyl phosphate (CP) to the N(epsilon) atom of ornithine (ORN) to produce L-citrulline. The sequence is that of Ornithine carbamoyltransferase from Neisseria meningitidis serogroup C / serotype 2a (strain ATCC 700532 / DSM 15464 / FAM18).